The chain runs to 674 residues: DNA ligase (674 aa).

NAD(+) is bound by residues Asp34–Asp38, Ser83–Leu84, and Glu114. Lys116 acts as the N6-AMP-lysine intermediate in catalysis. NAD(+) contacts are provided by Arg137, Glu174, Lys290, and Lys314. Positions 405, 408, 424, and 429 each coordinate Zn(2+). A BRCT domain is found at Gln587–Phe674.

This sequence belongs to the NAD-dependent DNA ligase family. LigA subfamily. The cofactor is Mg(2+). Requires Mn(2+) as cofactor.

The catalysed reaction is NAD(+) + (deoxyribonucleotide)n-3'-hydroxyl + 5'-phospho-(deoxyribonucleotide)m = (deoxyribonucleotide)n+m + AMP + beta-nicotinamide D-nucleotide.. DNA ligase that catalyzes the formation of phosphodiester linkages between 5'-phosphoryl and 3'-hydroxyl groups in double-stranded DNA using NAD as a coenzyme and as the energy source for the reaction. It is essential for DNA replication and repair of damaged DNA. The chain is DNA ligase from Endomicrobium trichonymphae.